A 202-amino-acid chain; its full sequence is MKILFDLLPVILFFVAYKIAGGNQAFAHELASRWLGDGIAVTQAPILLATAVAILATIAQIGWVWMRHRKVDTMLWISLAIIAVFGGATLFFHNPTFIKWKPTALYWLFGGTLTVSAVIFRRNLIRKMLEAQIRLPEPVWKRLNLAWAGFFILMGFLNLYVAYNFSEEAWVNFKLFGGMGLMLLFVLGQGFYLSRHIQEETT.

The next 6 membrane-spanning stretches (helical) occupy residues 3-23 (ILFD…AGGN), 46-66 (ILLA…WVWM), 73-93 (TMLW…LFFH), 100-120 (WKPT…AVIF), 145-165 (LAWA…AYNF), and 173-193 (FKLF…GFYL).

Belongs to the YciB family.

It is found in the cell inner membrane. Functionally, plays a role in cell envelope biogenesis, maintenance of cell envelope integrity and membrane homeostasis. The chain is Inner membrane-spanning protein YciB from Aromatoleum aromaticum (strain DSM 19018 / LMG 30748 / EbN1) (Azoarcus sp. (strain EbN1)).